A 238-amino-acid chain; its full sequence is Ribosomal RNA large subunit methyltransferase E (238 aa).

The S-adenosyl-L-methionine site is built by Gly76, Trp78, Asp99, Asp115, and Asp139. The active-site Proton acceptor is Lys179.

This sequence belongs to the class I-like SAM-binding methyltransferase superfamily. RNA methyltransferase RlmE family.

The protein localises to the cytoplasm. The catalysed reaction is uridine(2552) in 23S rRNA + S-adenosyl-L-methionine = 2'-O-methyluridine(2552) in 23S rRNA + S-adenosyl-L-homocysteine + H(+). In terms of biological role, specifically methylates the uridine in position 2552 of 23S rRNA at the 2'-O position of the ribose in the fully assembled 50S ribosomal subunit. The protein is Ribosomal RNA large subunit methyltransferase E of Rhodopseudomonas palustris (strain BisB18).